Reading from the N-terminus, the 250-residue chain is Flavin-dependent thymidylate synthase (250 aa).

The ThyX domain occupies 7 to 233 (LRVQLIAKTE…PQVFSDFEIT (227 aa)). Residues S71, 95–97 (RHR), and Q103 each bind FAD. Residues 92 to 95 (ELIR), 103 to 107 (QLSQR), and R172 each bind dUMP. A ThyX motif motif is present at residues 95 to 105 (RHRHFSYSQLS). FAD-binding positions include 188–190 (NYR) and H194. DUMP is bound at residue R199. Catalysis depends on R199, which acts as the Involved in ionization of N3 of dUMP, leading to its activation.

This sequence belongs to the thymidylate synthase ThyX family. As to quaternary structure, homotetramer. FAD serves as cofactor.

It carries out the reaction dUMP + (6R)-5,10-methylene-5,6,7,8-tetrahydrofolate + NADPH + H(+) = dTMP + (6S)-5,6,7,8-tetrahydrofolate + NADP(+). It functions in the pathway pyrimidine metabolism; dTTP biosynthesis. In terms of biological role, catalyzes the reductive methylation of 2'-deoxyuridine-5'-monophosphate (dUMP) to 2'-deoxythymidine-5'-monophosphate (dTMP) while utilizing 5,10-methylenetetrahydrofolate (mTHF) as the methyl donor, and NADPH and FADH(2) as the reductant. The protein is Flavin-dependent thymidylate synthase of Mycolicibacterium gilvum (strain PYR-GCK) (Mycobacterium gilvum (strain PYR-GCK)).